We begin with the raw amino-acid sequence, 525 residues long: Lymphocyte activation gene 3 protein (525 aa).

Residues 1-23 (MRQDLFLDLLLLQLLWEAPVVSS) form the signal peptide. At 24–442 (GPGKELSVVW…ISGDLKGGHL (419 aa)) the chain is on the extracellular side. In terms of domain architecture, Ig-like V-type spans 37-163 (GAPVHLPCSL…FSCSLRLRVG (127 aa)). Residues 37–246 (GAPVHLPCSL…LTYRDGFNVS (210 aa)) are interaction with FGL1. A disulfide bridge connects residues Cys-44 and Cys-156. Ig-like C2-type domains are found at residues 164–246 (QASM…FNVS), 258–341 (PVAP…AAVT), and 345–412 (ITVT…EGQK). N-linked (GlcNAc...) asparagine glycosylation is present at Asn-184. Cys-185 and Cys-235 are disulfide-bonded. 2 N-linked (GlcNAc...) asparagine glycosylation sites follow: Asn-244 and Asn-309. Intrachain disulfides connect Cys-276-Cys-327 and Cys-363-Cys-405. The connecting peptide stretch occupies residues 422–442 (ESSSGAWSAKRISGDLKGGHL). Residues 443-463 (FLSLILGALALFLLVTGAFGF) form a helical membrane-spanning segment. Over 464-525 (HLWRRQLLRR…PELEPESRQL (62 aa)) the chain is Cytoplasmic. Positions 486–525 (PVQSKIEELEREPETEMEPETEPDPEPQPEPELEPESRQL) are disordered. Residues 490–495 (KIEELE) carry the KIEELE motif motif. Residues 490 to 499 (KIEELEREPE) are compositionally biased toward basic and acidic residues. Positions 493-522 (ELEREPETEMEPETEPDPEPQPEPELEPES) are 15 X 2 AA tandem repeats of E-X. Acidic residues predominate over residues 500 to 519 (TEMEPETEPDPEPQPEPELE).

Belongs to the LAG3 family. Interacts with MHC class II (MHC-II); selectively recognizes stable complexes of peptide and MHC-II. Interacts with FGL1 (via the Fibrinogen C-terminal domain). In terms of processing, proteolytically cleaved by ADAM10 and ADAM17 within the connecting peptide region, leading to release of Secreted lymphocyte activation gene 3 protein (sLAG-3). ADAM10 mediates constitutive cleavage, but cleavage increases following T-cell activation, whereas shedding by ADAM17 is induced by TCR signaling in a PRKCQ-dependent manner.

It localises to the cell membrane. It is found in the secreted. In terms of biological role, lymphocyte activation gene 3 protein: Inhibitory receptor on antigen activated T-cells. Delivers inhibitory signals upon binding to ligands, such as FGL1. FGL1 constitutes a major ligand of LAG3 and is responsible for LAG3 T-cell inhibitory function. Following TCR engagement, LAG3 associates with CD3-TCR in the immunological synapse and directly inhibits T-cell activation. May inhibit antigen-specific T-cell activation in synergy with PDCD1/PD-1, possibly by acting as a coreceptor for PDCD1/PD-1. Negatively regulates the proliferation, activation, effector function and homeostasis of both CD8(+) and CD4(+) T-cells. Also mediates immune tolerance: constitutively expressed on a subset of regulatory T-cells (Tregs) and contributes to their suppressive function. Also acts as a negative regulator of plasmacytoid dendritic cell (pDCs) activation. Binds MHC class II (MHC-II); the precise role of MHC-II-binding is however unclear. Functionally, may function as a ligand for MHC class II (MHC-II) on antigen-presenting cells (APC), promoting APC activation/maturation and driving Th1 immune response. This chain is Lymphocyte activation gene 3 protein (Lag3), found in Rattus norvegicus (Rat).